Reading from the N-terminus, the 120-residue chain is Neuromedin-B (120 aa).

The N-terminal stretch at 1–29 (MSAVPLTRMLPLRFLTHLLLLSFIPLYFC) is a signal peptide. Residues 30–44 (MEFSEDARNIEKIRR) constitute a propeptide that is removed on maturation. Position 54 is a methionine amide (methionine 54). Positions 58-120 (SLQDTYNPSE…MDDYIKTTQK (63 aa)) are excised as a propeptide.

It belongs to the bombesin/neuromedin-B/ranatensin family. As to expression, brain, intestine, and ovaries and early embryos (stages 2 and 10).

The protein localises to the secreted. Stimulates smooth muscle contraction. The chain is Neuromedin-B (nmb) from Xenopus laevis (African clawed frog).